A 244-amino-acid polypeptide reads, in one-letter code: Phosphoadenosine 5'-phosphosulfate reductase (244 aa).

The Nucleophile; cysteine thiosulfonate intermediate role is filled by C239.

This sequence belongs to the PAPS reductase family. CysH subfamily.

It is found in the cytoplasm. It carries out the reaction [thioredoxin]-disulfide + sulfite + adenosine 3',5'-bisphosphate + 2 H(+) = [thioredoxin]-dithiol + 3'-phosphoadenylyl sulfate. The protein operates within sulfur metabolism; hydrogen sulfide biosynthesis; sulfite from sulfate: step 3/3. Its function is as follows. Catalyzes the formation of sulfite from phosphoadenosine 5'-phosphosulfate (PAPS) using thioredoxin as an electron donor. This chain is Phosphoadenosine 5'-phosphosulfate reductase, found in Photorhabdus laumondii subsp. laumondii (strain DSM 15139 / CIP 105565 / TT01) (Photorhabdus luminescens subsp. laumondii).